The chain runs to 517 residues: Amidophosphoribosyltransferase (517 aa).

M1 carries the post-translational modification N-acetylmethionine. The propeptide occupies 1–11; it reads MELEELGIREE. C12 serves as the catalytic Nucleophile. The 250-residue stretch at 12–261 folds into the Glutamine amidotransferase type-2 domain; the sequence is CGVFGCIASG…PGEIVEISRH (250 aa). C280 provides a ligand contact to [4Fe-4S] cluster. Mg(2+) is bound by residues S327, D389, and D390. 3 residues coordinate [4Fe-4S] cluster: C426, C503, and C506.

The protein in the C-terminal section; belongs to the purine/pyrimidine phosphoribosyltransferase family. In terms of assembly, homotetramer. Requires Mg(2+) as cofactor. It depends on [4Fe-4S] cluster as a cofactor.

It carries out the reaction 5-phospho-beta-D-ribosylamine + L-glutamate + diphosphate = 5-phospho-alpha-D-ribose 1-diphosphate + L-glutamine + H2O. It functions in the pathway purine metabolism; IMP biosynthesis via de novo pathway; N(1)-(5-phospho-D-ribosyl)glycinamide from 5-phospho-alpha-D-ribose 1-diphosphate: step 1/2. In terms of biological role, catalyzes the formation of phosphoribosylamine from phosphoribosylpyrophosphate (PRPP) and glutamine. The chain is Amidophosphoribosyltransferase from Mus musculus (Mouse).